A 515-amino-acid chain; its full sequence is Elongation factor 1-alpha S (515 aa).

A tr-type G domain is found at 5 to 258 (KTHINLVVIG…DAMKPPKRPT (254 aa)). The tract at residues 14–21 (GHVDAGKS) is G1. 14 to 21 (GHVDAGKS) contributes to the GTP binding site. Lys-55 is modified (N6,N6-dimethyllysine). The interval 70–74 (GITID) is G2. The residue at position 79 (Lys-79) is an N6,N6,N6-trimethyllysine. Residues 91–94 (DAPG) form a G3 region. GTP is bound by residues 91–95 (DAPGH) and 151–154 (NKMD). The segment at 151–154 (NKMD) is G4. Residues 187 to 206 (KKDKGDKKKGDKKEKKDKKD) are disordered. Basic and acidic residues predominate over residues 189–206 (DKGDKKKGDKKEKKDKKD). The G5 stretch occupies residues 222 to 224 (SGW). Lys-289 is subject to N6-methyllysine. The residue at position 334 (Lys-334) is an N6,N6,N6-trimethyllysine. A disordered region spans residues 396 to 419 (KRGKQTHDVSDDTEWATKDDAEPR). Over residues 398 to 419 (GKQTHDVSDDTEWATKDDAEPR) the composition is skewed to basic and acidic residues. The residue at position 441 (Lys-441) is an N6,N6,N6-trimethyllysine.

This sequence belongs to the TRAFAC class translation factor GTPase superfamily. Classic translation factor GTPase family. EF-Tu/EF-1A subfamily.

It localises to the cytoplasm. Its function is as follows. This protein promotes the GTP-dependent binding of aminoacyl-tRNA to the A-site of ribosomes during protein biosynthesis. In Porphyra purpurea (Red seaweed), this protein is Elongation factor 1-alpha S (TEF-S).